We begin with the raw amino-acid sequence, 324 residues long: Beta-ketoacyl-[acyl-carrier-protein] synthase III (324 aa).

Active-site residues include cysteine 112 and histidine 249. Residues 250–254 (QANRR) are ACP-binding. The active site involves asparagine 279.

The protein belongs to the thiolase-like superfamily. FabH family. Homodimer.

The protein resides in the cytoplasm. The enzyme catalyses malonyl-[ACP] + acetyl-CoA + H(+) = 3-oxobutanoyl-[ACP] + CO2 + CoA. The protein operates within lipid metabolism; fatty acid biosynthesis. Its function is as follows. Catalyzes the condensation reaction of fatty acid synthesis by the addition to an acyl acceptor of two carbons from malonyl-ACP. Catalyzes the first condensation reaction which initiates fatty acid synthesis and may therefore play a role in governing the total rate of fatty acid production. Possesses both acetoacetyl-ACP synthase and acetyl transacylase activities. Its substrate specificity determines the biosynthesis of branched-chain and/or straight-chain of fatty acids. This Streptococcus equi subsp. zooepidemicus (strain MGCS10565) protein is Beta-ketoacyl-[acyl-carrier-protein] synthase III.